A 102-amino-acid polypeptide reads, in one-letter code: Small ribosomal subunit protein uS10 (102 aa).

This sequence belongs to the universal ribosomal protein uS10 family. Part of the 30S ribosomal subunit.

Functionally, involved in the binding of tRNA to the ribosomes. The protein is Small ribosomal subunit protein uS10 of Thermotoga neapolitana (strain ATCC 49049 / DSM 4359 / NBRC 107923 / NS-E).